The sequence spans 776 residues: LPS-assembly protein LptD (776 aa).

Residues M1–A24 form the signal peptide.

Belongs to the LptD family. Component of the lipopolysaccharide transport and assembly complex. Interacts with LptE and LptA.

It localises to the cell outer membrane. Its function is as follows. Together with LptE, is involved in the assembly of lipopolysaccharide (LPS) at the surface of the outer membrane. The sequence is that of LPS-assembly protein LptD from Vibrio vulnificus (strain YJ016).